A 231-amino-acid chain; its full sequence is Large ribosomal subunit protein uL1 (231 aa).

It belongs to the universal ribosomal protein uL1 family. In terms of assembly, part of the 50S ribosomal subunit.

Functionally, binds directly to 23S rRNA. The L1 stalk is quite mobile in the ribosome, and is involved in E site tRNA release. In terms of biological role, protein L1 is also a translational repressor protein, it controls the translation of the L11 operon by binding to its mRNA. This Neisseria meningitidis serogroup A / serotype 4A (strain DSM 15465 / Z2491) protein is Large ribosomal subunit protein uL1.